We begin with the raw amino-acid sequence, 274 residues long: Shikimate dehydrogenase (NADP(+)) (274 aa).

Residues 14–16 (SKS) and Thr60 contribute to the shikimate site. Lys64 acts as the Proton acceptor in catalysis. Residue Glu76 participates in NADP(+) binding. Residues Asn85 and Asp101 each coordinate shikimate. NADP(+) contacts are provided by residues 126 to 130 (GAGGA), 150 to 155 (NRTAEK), and Met214. A shikimate-binding site is contributed by Tyr216. Gly238 is a binding site for NADP(+).

This sequence belongs to the shikimate dehydrogenase family. In terms of assembly, homodimer.

It catalyses the reaction shikimate + NADP(+) = 3-dehydroshikimate + NADPH + H(+). The protein operates within metabolic intermediate biosynthesis; chorismate biosynthesis; chorismate from D-erythrose 4-phosphate and phosphoenolpyruvate: step 4/7. In terms of biological role, involved in the biosynthesis of the chorismate, which leads to the biosynthesis of aromatic amino acids. Catalyzes the reversible NADPH linked reduction of 3-dehydroshikimate (DHSA) to yield shikimate (SA). In Pseudomonas paraeruginosa (strain DSM 24068 / PA7) (Pseudomonas aeruginosa (strain PA7)), this protein is Shikimate dehydrogenase (NADP(+)).